We begin with the raw amino-acid sequence, 331 residues long: Adenosine deaminase (331 aa).

2 residues coordinate Zn(2+): His-12 and His-14. Substrate contacts are provided by His-14, Asp-16, and Gly-170. His-197 serves as a coordination point for Zn(2+). The active-site Proton donor is the Glu-200. Position 278 (Asp-278) interacts with Zn(2+).

This sequence belongs to the metallo-dependent hydrolases superfamily. Adenosine and AMP deaminases family. Adenosine deaminase subfamily. The cofactor is Zn(2+).

The catalysed reaction is adenosine + H2O + H(+) = inosine + NH4(+). It carries out the reaction 2'-deoxyadenosine + H2O + H(+) = 2'-deoxyinosine + NH4(+). Catalyzes the hydrolytic deamination of adenosine and 2-deoxyadenosine. This chain is Adenosine deaminase, found in Vibrio vulnificus (strain CMCP6).